The chain runs to 161 residues: Endoribonuclease YbeY (161 aa).

Zn(2+) contacts are provided by His-120, His-124, and Asp-130.

This sequence belongs to the endoribonuclease YbeY family. Zn(2+) serves as cofactor.

It is found in the cytoplasm. Functionally, single strand-specific metallo-endoribonuclease involved in late-stage 70S ribosome quality control and in maturation of the 3' terminus of the 16S rRNA. This Chlamydia trachomatis serovar L2 (strain ATCC VR-902B / DSM 19102 / 434/Bu) protein is Endoribonuclease YbeY.